We begin with the raw amino-acid sequence, 381 residues long: Pectin lyase 1 (381 aa).

An N-terminal signal peptide occupies residues 1 to 20 (MKYASFIAAAAAALASAVSA). 2 disulfides stabilise this stretch: Cys83–Cys102 and Cys92–Cys227. Residue Asn130 is glycosylated (N-linked (GlcNAc...) asparagine). Residue Arg257 is part of the active site. A disulfide bridge links Cys324 with Cys332.

The protein belongs to the polysaccharide lyase 1 family.

The protein localises to the secreted. The enzyme catalyses Eliminative cleavage of (1-&gt;4)-alpha-D-galacturonan methyl ester to give oligosaccharides with 4-deoxy-6-O-methyl-alpha-D-galact-4-enuronosyl groups at their non-reducing ends.. Pectinolytic enzymes consist of four classes of enzymes: pectin lyase, polygalacturonase, pectin methylesterase and rhamnogalacturonase. Among pectinolytic enzymes, pectin lyase is the most important in depolymerization of pectin, since it cleaves internal glycosidic bonds of highly methylated pectins. The protein is Pectin lyase 1 (pel1) of Aspergillus oryzae (strain ATCC 42149 / RIB 40) (Yellow koji mold).